The following is a 205-amino-acid chain: Nitrophorin-4 (205 aa).

The first 21 residues, 1–21 (MKSYTSLLAVAILCLFGGVNG), serve as a signal peptide directing secretion. 2 disulfide bridges follow: Cys-23–Cys-143 and Cys-62–Cys-192. Residue His-80 coordinates heme.

It belongs to the calycin superfamily. Nitrophorin family. The cofactor is heme b. In terms of tissue distribution, salivary gland (at protein level).

Its subcellular location is the secreted. The catalysed reaction is 3 nitrite + 2 H(+) = 2 nitric oxide + nitrate + H2O. In terms of biological role, heme-based protein that delivers nitric oxide gas (NO) to the victim while feeding, resulting in vasodilation and inhibition of platelet aggregation. Reversibly binds nitric oxide (NO). Also binds tightly to histamine, which is released by the host to induce wound healing. NO release is pH dependent and linked to loop dynamics. The chain is Nitrophorin-4 from Rhodnius prolixus (Triatomid bug).